The following is a 364-amino-acid chain: GDSL esterase/lipase 7 (364 aa).

Residues M1 to G19 form the signal peptide. Residue S37 is the Nucleophile of the active site. Residues N236, N237, and N264 are each glycosylated (N-linked (GlcNAc...) asparagine). Residues D329 and H332 contribute to the active site. N351 is a glycosylation site (N-linked (GlcNAc...) asparagine).

Belongs to the 'GDSL' lipolytic enzyme family.

It localises to the secreted. In Arabidopsis thaliana (Mouse-ear cress), this protein is GDSL esterase/lipase 7 (GLIP7).